Here is a 622-residue protein sequence, read N- to C-terminus: Threonine--tRNA ligase (622 aa).

Residues 1–136 (MKTLLIHSDY…PLSELSRKIT (136 aa)) are editing domain. The segment at 199–498 (PHVKYIKEKE…TLENKPPALP (300 aa)) is catalytic. Zn(2+) contacts are provided by cysteine 291, histidine 343, and histidine 467.

This sequence belongs to the class-II aminoacyl-tRNA synthetase family. In terms of assembly, homodimer. Zn(2+) serves as cofactor.

Its subcellular location is the cytoplasm. It carries out the reaction tRNA(Thr) + L-threonine + ATP = L-threonyl-tRNA(Thr) + AMP + diphosphate + H(+). In terms of biological role, catalyzes the attachment of threonine to tRNA(Thr) in a two-step reaction: L-threonine is first activated by ATP to form Thr-AMP and then transferred to the acceptor end of tRNA(Thr). Also edits incorrectly charged L-seryl-tRNA(Thr). This Methanococcus maripaludis (strain DSM 14266 / JCM 13030 / NBRC 101832 / S2 / LL) protein is Threonine--tRNA ligase.